The primary structure comprises 102 residues: Small ribosomal subunit protein uS10 (102 aa).

This sequence belongs to the universal ribosomal protein uS10 family. Part of the 30S ribosomal subunit.

Functionally, involved in the binding of tRNA to the ribosomes. The chain is Small ribosomal subunit protein uS10 from Citrifermentans bemidjiense (strain ATCC BAA-1014 / DSM 16622 / JCM 12645 / Bem) (Geobacter bemidjiensis).